The chain runs to 1071 residues: ATP-dependent helicase/deoxyribonuclease subunit B (1071 aa).

The protein belongs to the helicase family. AddB/RexB type 2 subfamily. As to quaternary structure, heterodimer of AddA and RexB. It depends on Mg(2+) as a cofactor.

In terms of biological role, the heterodimer acts as both an ATP-dependent DNA helicase and an ATP-dependent, dual-direction single-stranded exonuclease. Recognizes the chi site generating a DNA molecule suitable for the initiation of homologous recombination. This subunit has 5' -&gt; 3' nuclease activity but not helicase activity. The polypeptide is ATP-dependent helicase/deoxyribonuclease subunit B (Streptococcus pyogenes serotype M12 (strain MGAS9429)).